The primary structure comprises 342 residues: MILSIESSCDDSSLALTRIEDAKLIAHFKISQEKHHSSYGGVVPELASRLHAENLPLLLERIKISLNKDFSKLKAIAITNQPGLSVTLIEGLMMAKALSLSLNLPLILEDHLRGHVYSLFINEKKTCMPLSVLLVSGGHSLILEARNYEDIKIMATSLDDSFGESFDKVSKMLNLGYPGGPVIEKLALDYAHKNEPLMFPIPLKNSLNLAFSFSGLKNAVRLEIEKNAPNLNEITKQKIGYHFQSVAIEHLIQQTKRYFKTKRPKIFGIVGGASQNLVLRKAFENLCDEFDCKLVLAPLEFCSDNAAMIGRSSLEAYQKKHFVPLEKASISPRTLLKKALSE.

Positions 111 and 115 each coordinate Fe cation. Residues Leu-134–Gly-138, Asp-167, Gly-180, and Asn-276 contribute to the substrate site. Asp-304 lines the Fe cation pocket.

It belongs to the KAE1 / TsaD family. Fe(2+) is required as a cofactor.

The protein resides in the cytoplasm. It catalyses the reaction L-threonylcarbamoyladenylate + adenosine(37) in tRNA = N(6)-L-threonylcarbamoyladenosine(37) in tRNA + AMP + H(+). Required for the formation of a threonylcarbamoyl group on adenosine at position 37 (t(6)A37) in tRNAs that read codons beginning with adenine. Is involved in the transfer of the threonylcarbamoyl moiety of threonylcarbamoyl-AMP (TC-AMP) to the N6 group of A37, together with TsaE and TsaB. TsaD likely plays a direct catalytic role in this reaction. This Helicobacter acinonychis (strain Sheeba) protein is tRNA N6-adenosine threonylcarbamoyltransferase.